The sequence spans 381 residues: Carboxylesterase 5A (381 aa).

Serine 108 functions as the Acyl-ester intermediate in the catalytic mechanism. Residues cysteine 162 and cysteine 173 are joined by a disulfide bond. N-linked (GlcNAc...) asparagine glycosylation is present at asparagine 163. Glutamate 227 (charge relay system) is an active-site residue. Residue asparagine 245 is glycosylated (N-linked (GlcNAc...) asparagine). Histidine 336 serves as the catalytic Charge relay system.

This sequence belongs to the type-B carboxylesterase/lipase family. In terms of assembly, component of a epididymal complex at least composed of soluble form of prion protein PRNP, CLU, BPI, CES5A, MANBA and GLB1. In terms of processing, N-glycosylated. In terms of tissue distribution, detected in corpus and cauda epididymal fluid. Present in seminal fluid but not found to be associated with sperm (at protein level). Not expressed in other tissues.

It is found in the secreted. It carries out the reaction a carboxylic ester + H2O = an alcohol + a carboxylate + H(+). Involved in the detoxification of xenobiotics and in the activation of ester and amide prodrugs. The polypeptide is Carboxylesterase 5A (CES5A) (Ovis aries (Sheep)).